The following is a 95-amino-acid chain: Small ribosomal subunit protein bS6 (95 aa).

It belongs to the bacterial ribosomal protein bS6 family.

Its function is as follows. Binds together with bS18 to 16S ribosomal RNA. The sequence is that of Small ribosomal subunit protein bS6 from Shouchella clausii (strain KSM-K16) (Alkalihalobacillus clausii).